The sequence spans 389 residues: viridiflorene synthase Agr2 (389 aa).

Residues 1–15 (MVWDFVLSLFHSLLA) form the signal peptide. Residues D128, N263, S267, and E271 each coordinate Mg(2+). The DDXXD motif signature appears at 128–132 (DEVTD). Residues R360 and Y361 each contribute to the (2E,6E)-farnesyl diphosphate site.

The protein belongs to the terpene synthase family. Requires Mg(2+) as cofactor.

The enzyme catalyses (2E,6E)-farnesyl diphosphate = viridiflorene + diphosphate. In terms of biological role, terpene cyclase that catalyzes the cyclization of farnesyl diphosphate (FPP) to viridiflorene. This Cyclocybe aegerita (Black poplar mushroom) protein is viridiflorene synthase Agr2.